We begin with the raw amino-acid sequence, 363 residues long: Protein-glutamate methylesterase/protein-glutamine glutaminase of group 3 operon (363 aa).

A Response regulatory domain is found at 7–124 (RVLIVDDSAS…RQALLECSTR (118 aa)). D58 is subject to 4-aspartylphosphate. One can recognise a CheB-type methylesterase domain in the interval 166–357 (PTTERIVCIG…REIMLWYQAG (192 aa)). Residues S177, H203, and D299 contribute to the active site.

This sequence belongs to the CheB family. Post-translationally, phosphorylated by CheA. Phosphorylation of the N-terminal regulatory domain activates the methylesterase activity.

It is found in the cytoplasm. It catalyses the reaction [protein]-L-glutamate 5-O-methyl ester + H2O = L-glutamyl-[protein] + methanol + H(+). It carries out the reaction L-glutaminyl-[protein] + H2O = L-glutamyl-[protein] + NH4(+). Involved in chemotaxis. Part of a chemotaxis signal transduction system that modulates chemotaxis in response to various stimuli. Catalyzes the demethylation of specific methylglutamate residues introduced into the chemoreceptors (methyl-accepting chemotaxis proteins or MCP) by CheR. Also mediates the irreversible deamidation of specific glutamine residues to glutamic acid. The protein is Protein-glutamate methylesterase/protein-glutamine glutaminase of group 3 operon of Bradyrhizobium diazoefficiens (strain JCM 10833 / BCRC 13528 / IAM 13628 / NBRC 14792 / USDA 110).